The primary structure comprises 452 residues: Scaffold protein ILK (452 aa).

ANK repeat units follow at residues 2 to 30 (DDIF…LNQG), 31 to 63 (DDHG…INVM), 64 to 96 (NRGD…INAV), 97 to 129 (NEHG…VSIA), and 130 to 174 (NKYS…GTTR). The Protein kinase domain maps to 193–446 (LSLSQKLNEN…PKFDMIVPIL (254 aa)). ATP-binding residues include Asn-200, Asn-202, Ser-204, His-270, Met-272, and Asn-279. Residue Asp-339 coordinates Mg(2+). Residue Lys-341 participates in ATP binding. The short motif at 363–371 (KKPEEINRR) is the Nuclear localization signal element.

Belongs to the protein kinase superfamily. TKL Ser/Thr protein kinase family. Interacts with PXN/PAXILLIN (via LD motif 4).

It is found in the cell junction. It localises to the focal adhesion. Its subcellular location is the cell membrane. The protein localises to the cell projection. The protein resides in the lamellipodium. It is found in the cytoplasm. It localises to the myofibril. Its subcellular location is the sarcomere. The protein localises to the nucleus. The protein resides in the cytoskeleton. It is found in the microtubule organizing center. It localises to the centrosome. Its subcellular location is the cell cortex. Its function is as follows. Scaffold protein which mediates protein-protein interactions during a range of cellular events including focal adhesion assembly, cell adhesion and cell migration. This Gallus gallus (Chicken) protein is Scaffold protein ILK.